A 910-amino-acid polypeptide reads, in one-letter code: Ubiquitin carboxyl-terminal hydrolase 9 (910 aa).

The DUSP domain maps to 19-134; that stretch reads TTPEEEKRIV…GGPPIERKLI (116 aa). Residues 68–89 form a disordered region; sequence ISGESSEASRPGPIDNHDIIES. Positions 303 to 894 constitute a USP domain; sequence AGLSNLGNTC…AAYVLFYRRV (592 aa). The Nucleophile role is filled by Cys312. The active-site Proton acceptor is the His852.

This sequence belongs to the peptidase C19 family.

It carries out the reaction Thiol-dependent hydrolysis of ester, thioester, amide, peptide and isopeptide bonds formed by the C-terminal Gly of ubiquitin (a 76-residue protein attached to proteins as an intracellular targeting signal).. Functionally, recognizes and hydrolyzes the peptide bond at the C-terminal Gly of ubiquitin. Involved in the processing of poly-ubiquitin precursors as well as that of ubiquitinated proteins. The chain is Ubiquitin carboxyl-terminal hydrolase 9 (UBP9) from Arabidopsis thaliana (Mouse-ear cress).